The following is a 916-amino-acid chain: DNA repair endonuclease XPF (916 aa).

A helicase-like region spans residues M1–D457. Leucine-zipper regions lie at residues L233 to L254 and L270 to L298. N6-acetyllysine is present on K289. The segment at K460–K487 is disordered. Positions K470–R483 are enriched in basic and acidic residues. The short motif at K486 to K491 is the Nuclear localization signal element. K500 participates in a covalent cross-link: Glycyl lysine isopeptide (Lys-Gly) (interchain with G-Cter in SUMO2). Disordered regions lie at residues E502–P526 and T660–G679. The residue at position 521 (S521) is a Phosphoserine. Residues R658–F813 are nuclease. An ERCC4 domain is found at S683–P763. S764 bears the Phosphoserine mark. The tract at residues T837–F905 is hhH2, dimerization with ERCC1. The residue at position 911 (K911) is an N6-acetyllysine.

Belongs to the XPF family. As to quaternary structure, heterodimer composed of ERCC1 and ERCC4/XPF. Interacts with SLX4/BTBD12; this interaction is direct and links the ERCC1-ERCC4/XPF complex to SLX4, which may coordinate the action of the structure-specific endonuclease during DNA repair. Mg(2+) serves as cofactor. In terms of processing, acetylation at Lys-911 by KAT5 promotes interaction with ERCC1 by disrupting a salt bridge between Glu-907 and Lys-911, thereby exposing a second binding site for ERCC1. Deacetylated by SIRT1.

It localises to the nucleus. The protein localises to the chromosome. Catalytic component of a structure-specific DNA repair endonuclease responsible for the 5-prime incision during DNA repair, and which is essential for nucleotide excision repair (NER) and interstrand cross-link (ICL) repair. This Homo sapiens (Human) protein is DNA repair endonuclease XPF.